The following is a 216-amino-acid chain: Adenylate kinase (216 aa).

10-15 (GAGKGT) lines the ATP pocket. The tract at residues 30–59 (STGDMFRAAMKAETELGLQAKSFIDKGALV) is NMP. AMP is bound by residues T31, R36, 57 to 59 (ALV), 85 to 88 (GFPR), and Q92. The interval 126–163 (GRRICKECGATYHLEFNPPAKADVCDKCGGELYQRSDD) is LID. R127 provides a ligand contact to ATP. C130 and C133 together coordinate Zn(2+). Residue 136–137 (TY) coordinates ATP. C150 and C153 together coordinate Zn(2+). AMP contacts are provided by R160 and R171. Q199 is a binding site for ATP.

Belongs to the adenylate kinase family. In terms of assembly, monomer.

It is found in the cytoplasm. It catalyses the reaction AMP + ATP = 2 ADP. Its pathway is purine metabolism; AMP biosynthesis via salvage pathway; AMP from ADP: step 1/1. In terms of biological role, catalyzes the reversible transfer of the terminal phosphate group between ATP and AMP. Plays an important role in cellular energy homeostasis and in adenine nucleotide metabolism. The chain is Adenylate kinase from Bacillus mycoides (strain KBAB4) (Bacillus weihenstephanensis).